Reading from the N-terminus, the 185-residue chain is HTH-type transcriptional regulator SACOL2593 (185 aa).

The HTH tetR-type domain occupies 6-66 (KENRQRIEEI…YVIQRDLDIF (61 aa)). Positions 29 to 48 (SMNRIAKELGIGMGTLYRHF) form a DNA-binding region, H-T-H motif.

This Staphylococcus aureus (strain COL) protein is HTH-type transcriptional regulator SACOL2593.